Reading from the N-terminus, the 98-residue chain is Small ribosomal subunit protein bS20 (98 aa).

It belongs to the bacterial ribosomal protein bS20 family.

Its function is as follows. Binds directly to 16S ribosomal RNA. The sequence is that of Small ribosomal subunit protein bS20 from Synechococcus sp. (strain CC9902).